We begin with the raw amino-acid sequence, 258 residues long: Octanoyltransferase (258 aa).

A BPL/LPL catalytic domain is found at 42–226 (NLGADTLLLL…AVVAALDGAL (185 aa)). Substrate is bound by residues 80 to 87 (RGGKITWH), 156 to 158 (AIG), and 169 to 171 (GFS). Cys187 functions as the Acyl-thioester intermediate in the catalytic mechanism.

It belongs to the LipB family.

Its subcellular location is the cytoplasm. It carries out the reaction octanoyl-[ACP] + L-lysyl-[protein] = N(6)-octanoyl-L-lysyl-[protein] + holo-[ACP] + H(+). The protein operates within protein modification; protein lipoylation via endogenous pathway; protein N(6)-(lipoyl)lysine from octanoyl-[acyl-carrier-protein]: step 1/2. Its function is as follows. Catalyzes the transfer of endogenously produced octanoic acid from octanoyl-acyl-carrier-protein onto the lipoyl domains of lipoate-dependent enzymes. Lipoyl-ACP can also act as a substrate although octanoyl-ACP is likely to be the physiological substrate. This is Octanoyltransferase from Rhodococcus opacus (strain B4).